The primary structure comprises 117 residues: Conotoxin vil14a (117 aa).

An N-terminal signal peptide occupies residues 1-22 (MGFRVLVLVVMATTSALPFTFS). Residues 23–90 (EEPGRSPFRP…FAETPVGQKR (68 aa)) constitute a propeptide that is removed on maturation. A disordered region spans residues 53–86 (RADGQPPDMRQPEMRRPEMRRPEVRQPEFAETPV). A compositionally biased stretch (basic and acidic residues) spans 62-80 (RQPEMRRPEMRRPEVRQPE). 2 disulfides stabilise this stretch: C96/C116 and C100/C112.

Belongs to the conotoxin R superfamily. Expressed by the venom duct.

It is found in the secreted. This Conus villepinii (Villepin's cone) protein is Conotoxin vil14a.